A 292-amino-acid polypeptide reads, in one-letter code: MPELPEVETVRRGLEPVMVGARILSVDQRRPDLRFPFPDRFPERLAGRRILALGRRAKYLLADLDDGDVLIMHLGMSGSFRVEQAGPAKTLSPRGAPPKNAAHDHVVFTLTSGGRIVYNDPRRFGFMQIAARADLAAHPLFRSLGVEPLGNELSGAALARLFAGKTTSLKAALLDQSLVAGLGNIYVCEALHRAGLSPLRQAGSLTKKSGRPTERANRLADTIREVLEEAVAAGGSSLRDHRQTNGALGYFQHNFRVYDRALHPCPTPGCKGEISRITQGGRSSFFCSMCQK.

Pro2 (schiff-base intermediate with DNA) is an active-site residue. Residue Glu3 is the Proton donor of the active site. Lys58 acts as the Proton donor; for beta-elimination activity in catalysis. The DNA site is built by His103, Arg122, and Lys165. An FPG-type zinc finger spans residues 256 to 292 (RVYDRALHPCPTPGCKGEISRITQGGRSSFFCSMCQK). The active-site Proton donor; for delta-elimination activity is Arg282.

This sequence belongs to the FPG family. Monomer. The cofactor is Zn(2+).

The enzyme catalyses Hydrolysis of DNA containing ring-opened 7-methylguanine residues, releasing 2,6-diamino-4-hydroxy-5-(N-methyl)formamidopyrimidine.. It catalyses the reaction 2'-deoxyribonucleotide-(2'-deoxyribose 5'-phosphate)-2'-deoxyribonucleotide-DNA = a 3'-end 2'-deoxyribonucleotide-(2,3-dehydro-2,3-deoxyribose 5'-phosphate)-DNA + a 5'-end 5'-phospho-2'-deoxyribonucleoside-DNA + H(+). Its function is as follows. Involved in base excision repair of DNA damaged by oxidation or by mutagenic agents. Acts as a DNA glycosylase that recognizes and removes damaged bases. Has a preference for oxidized purines, such as 7,8-dihydro-8-oxoguanine (8-oxoG). Has AP (apurinic/apyrimidinic) lyase activity and introduces nicks in the DNA strand. Cleaves the DNA backbone by beta-delta elimination to generate a single-strand break at the site of the removed base with both 3'- and 5'-phosphates. The polypeptide is Formamidopyrimidine-DNA glycosylase (Methylocella silvestris (strain DSM 15510 / CIP 108128 / LMG 27833 / NCIMB 13906 / BL2)).